We begin with the raw amino-acid sequence, 100 residues long: Small ribosomal subunit protein uS14c (100 aa).

Belongs to the universal ribosomal protein uS14 family. In terms of assembly, part of the 30S ribosomal subunit.

It localises to the plastid. Binds 16S rRNA, required for the assembly of 30S particles. The polypeptide is Small ribosomal subunit protein uS14c (Epifagus virginiana (Beechdrops)).